The primary structure comprises 47 residues: Single-stranded DNA-binding protein (47 aa).

As to quaternary structure, homodimer in the absence of DNA, monomer when binding DNA.

In terms of biological role, binds preferentially to single-stranded DNA and therefore, destabilizes double-stranded DNA. It is involved in DNA replication, repair and recombination. Binds ss-DNA as the replication fork advances and stimulates the replisome processivity and accuracy. In Escherichia coli (Bacteriophage RB6), this protein is Single-stranded DNA-binding protein (32).